The chain runs to 1153 residues: uncharacterized protein (1153 aa).

Residues 1–18 (MNKNIFITLLISLLLLSG) form the signal peptide. Cys-19 carries N-palmitoyl cysteine lipidation. Residue Cys-19 is the site of S-diacylglycerol cysteine attachment. Transmembrane regions (helical) follow at residues 289-309 (VSAILTLYIMFTGFSFLIGNI), 393-413 (LGFIYIILYLIALYFIFFLIF), 422-442 (ALITIGMIIIMGPIFICFMLF), and 457-477 (ISYALQPIILFTGIAFISMII).

It belongs to the TrbL/VirB6 family.

It localises to the cell membrane. This is an uncharacterized protein from Rickettsia conorii (strain ATCC VR-613 / Malish 7).